The sequence spans 98 residues: Integration host factor subunit alpha (98 aa).

The tract at residues Phe-49–Ile-71 is disordered.

This sequence belongs to the bacterial histone-like protein family. In terms of assembly, heterodimer of an alpha and a beta chain.

This protein is one of the two subunits of integration host factor, a specific DNA-binding protein that functions in genetic recombination as well as in transcriptional and translational control. In Shewanella sp. (strain MR-4), this protein is Integration host factor subunit alpha.